Here is a 193-residue protein sequence, read N- to C-terminus: Interleukin-18-binding protein (193 aa).

Positions 1 to 28 are cleaved as a signal peptide; sequence MTMRHCWTAGPSSWWVLLLYVHVILARA. The Ig-like C2-type domain maps to 60–161; sequence PALDVIWPEK…QVAQYHIILA (102 aa). N-linked (GlcNAc...) asparagine glycans are attached at residues Asn74, Asn98, Asn120, and Asn142. Cys81 and Cys145 are disulfide-bonded. Over residues 172–185 the composition is skewed to polar residues; that stretch reads SPSQETLSSHSPVS. The disordered stretch occupies residues 172 to 193; the sequence is SPSQETLSSHSPVSRSAGPGVA.

The protein localises to the secreted. Functionally, binds to IL-18 and inhibits its activity. Functions as an inhibitor of the early TH1 cytokine response. The sequence is that of Interleukin-18-binding protein (Il18bp) from Mus musculus (Mouse).